An 81-amino-acid chain; its full sequence is Large ribosomal subunit protein bL27 (81 aa).

The span at 1 to 11 shows a compositional bias: polar residues; sequence MATSKSGGSSK. Positions 1 to 20 are disordered; sequence MATSKSGGSSKNGRDSISKR.

The protein belongs to the bacterial ribosomal protein bL27 family.

The polypeptide is Large ribosomal subunit protein bL27 (Borreliella afzelii (strain PKo) (Borrelia afzelii)).